Consider the following 294-residue polypeptide: Cytidine deaminase (294 aa).

CMP/dCMP-type deaminase domains are found at residues 48–168 and 186–294; these read DDDA…FGPR and LKGD…VTLA. Substrate is bound at residue 89-91; sequence NME. A Zn(2+)-binding site is contributed by H102. Catalysis depends on E104, which acts as the Proton donor. The Zn(2+) site is built by C129 and C132.

This sequence belongs to the cytidine and deoxycytidylate deaminase family. As to quaternary structure, homodimer. Zn(2+) is required as a cofactor.

It catalyses the reaction cytidine + H2O + H(+) = uridine + NH4(+). It carries out the reaction 2'-deoxycytidine + H2O + H(+) = 2'-deoxyuridine + NH4(+). In terms of biological role, this enzyme scavenges exogenous and endogenous cytidine and 2'-deoxycytidine for UMP synthesis. The sequence is that of Cytidine deaminase from Cronobacter sakazakii (strain ATCC BAA-894) (Enterobacter sakazakii).